The sequence spans 216 residues: Octanoyltransferase (216 aa).

The BPL/LPL catalytic domain occupies 24-212 (KFRKECILFL…NLCSFLEPIN (189 aa)). Residues 69-76 (RGGDFTAH), 140-142 (SIG), and 153-155 (GIA) each bind substrate. The Acyl-thioester intermediate role is filled by cysteine 171.

This sequence belongs to the LipB family.

It localises to the cytoplasm. The catalysed reaction is octanoyl-[ACP] + L-lysyl-[protein] = N(6)-octanoyl-L-lysyl-[protein] + holo-[ACP] + H(+). The protein operates within protein modification; protein lipoylation via endogenous pathway; protein N(6)-(lipoyl)lysine from octanoyl-[acyl-carrier-protein]: step 1/2. Functionally, catalyzes the transfer of endogenously produced octanoic acid from octanoyl-acyl-carrier-protein onto the lipoyl domains of lipoate-dependent enzymes. Lipoyl-ACP can also act as a substrate although octanoyl-ACP is likely to be the physiological substrate. The chain is Octanoyltransferase from Leptospira interrogans serogroup Icterohaemorrhagiae serovar Lai (strain 56601).